A 159-amino-acid chain; its full sequence is 2-C-methyl-D-erythritol 2,4-cyclodiphosphate synthase (159 aa).

Residues aspartate 10 and histidine 12 each contribute to the a divalent metal cation site. 4-CDP-2-C-methyl-D-erythritol 2-phosphate-binding positions include 10–12 (DVH) and 36–37 (HS). Histidine 44 provides a ligand contact to a divalent metal cation. Residues 58–60 (DIG), 63–67 (FPDTD), 102–108 (AQAPKMA), 134–137 (TTTE), phenylalanine 141, and arginine 144 each bind 4-CDP-2-C-methyl-D-erythritol 2-phosphate.

The protein belongs to the IspF family. In terms of assembly, homotrimer. A divalent metal cation serves as cofactor.

The enzyme catalyses 4-CDP-2-C-methyl-D-erythritol 2-phosphate = 2-C-methyl-D-erythritol 2,4-cyclic diphosphate + CMP. It participates in isoprenoid biosynthesis; isopentenyl diphosphate biosynthesis via DXP pathway; isopentenyl diphosphate from 1-deoxy-D-xylulose 5-phosphate: step 4/6. Involved in the biosynthesis of isopentenyl diphosphate (IPP) and dimethylallyl diphosphate (DMAPP), two major building blocks of isoprenoid compounds. Catalyzes the conversion of 4-diphosphocytidyl-2-C-methyl-D-erythritol 2-phosphate (CDP-ME2P) to 2-C-methyl-D-erythritol 2,4-cyclodiphosphate (ME-CPP) with a corresponding release of cytidine 5-monophosphate (CMP). The sequence is that of 2-C-methyl-D-erythritol 2,4-cyclodiphosphate synthase from Shewanella piezotolerans (strain WP3 / JCM 13877).